Here is a 567-residue protein sequence, read N- to C-terminus: ERO1-like protein 2 (567 aa).

A signal peptide spans 1–22 (MKIAKGLVGLLILYKNVCQVLC). N-linked (GlcNAc...) asparagine glycosylation is present at asparagine 49. Cystine bridges form between cysteine 88–cysteine 386, cysteine 98–cysteine 103, cysteine 154–cysteine 325, and cysteine 389–cysteine 392. Positions 188, 190, 201, 258, 261, and 290 each coordinate FAD. The active-site Nucleophile is the cysteine 389. Cysteine 392 is an active-site residue. Residue asparagine 546 is glycosylated (N-linked (GlcNAc...) asparagine).

Belongs to the EROs family. In terms of assembly, may function both as a monomer and a homodimer. FAD is required as a cofactor. Post-translationally, N-glycosylated.

The protein resides in the endoplasmic reticulum membrane. Essential oxidoreductase that oxidizes proteins in the endoplasmic reticulum to produce disulfide bonds. Acts by oxidizing directly pdi1 isomerase through a direct disulfide exchange. Does not act as a direct oxidant of folding substrate, but relies on pdi1 to transfer oxidizing equivalent. Does not oxidize all pdi related proteins, suggesting that it can discriminate between pdi1 and related proteins. Its reoxidation probably involves electron transfer to molecular oxygen via FAD. Acts independently of glutathione. May be responsible for a significant proportion of reactive oxygen species (ROS) in the cell, thereby being a source of oxidative stress. The chain is ERO1-like protein 2 (ero12) from Schizosaccharomyces pombe (strain 972 / ATCC 24843) (Fission yeast).